The chain runs to 659 residues: MPNSHGNVLNNISLNSKQNPRSISKSCPNDKDARQKSFKTISAQALVRVQGAGYKLGDVKLKDAEVKEKNSLKKYDCKNATQEKKEQEQVFEKTVAKGSVQKYITKTSKTNSLFIGNLKSTVTEEMLRKIFKRYQSFESAKVCRDFLTKKSLGYGYLNFKDKNDAESARKEFNYTVFFGQEVKIMPSMKNTLFRKNIGTNVFFSNLPLENPQLTTRSFYLIMIEYGNVLSCLLERRKNIGFVYFDNDISARNVIKKYNNQEFFGNKIICGLHFDKEVRTRPEFTKRKKMIGSDIVIEDELLASNNLSDNARSKTILVKNLPSDTTQEEVLDYFSTIGPIKSVFISEKQANTPHKAFVTYKNEEESKKAQKCLNKTIFKNHTIWVGPGKDKPVHNQIGTNKKTKVYLKNLSFNCNKEFISQLCLQEKIRFSEIKITNYNSLNWTFCGHVECFSRSDAERLFNILDRRLIGSSLVEASWSKNNDNILNEIDYDDGNNNENYKKLINISSMMRFRTQELSAHQKGLTSQFQQVVSPFSSYSNSYTNMNSLVATPMKPHPAFNLITNTVDEKLHQPKRTKQENAEILESLKKIINRNLQRISISGLNKEENLRSISEFIFDVFWEHDSERLSHFLLMTNTSLESQKILQKQVTRAAESLGFTV.

Positions Met-1 to Cys-27 are enriched in polar residues. The segment at Met-1–Gln-35 is disordered. 3 consecutive RRM domains span residues Asn-111–Lys-189, Thr-199–Ile-267, and Lys-313–Asp-389.

In terms of assembly, interacts with MEX67.

It is found in the cytoplasm. This is RNA-binding protein MIP6 (MIP6) from Saccharomyces cerevisiae (strain ATCC 204508 / S288c) (Baker's yeast).